The chain runs to 100 residues: Urease subunit gamma (100 aa).

Belongs to the urease gamma subunit family. As to quaternary structure, heterotrimer of UreA (gamma), UreB (beta) and UreC (alpha) subunits. Three heterotrimers associate to form the active enzyme.

Its subcellular location is the cytoplasm. It catalyses the reaction urea + 2 H2O + H(+) = hydrogencarbonate + 2 NH4(+). The protein operates within nitrogen metabolism; urea degradation; CO(2) and NH(3) from urea (urease route): step 1/1. This is Urease subunit gamma from Bacillus cereus (strain ATCC 10987 / NRS 248).